Reading from the N-terminus, the 305-residue chain is Glyceraldehyde-3-phosphate dehydrogenase 2, cytosolic (305 aa).

NAD(+)-binding residues include Asp-3 and Arg-50. Residues 121–123, Thr-152, 181–182, and Arg-204 contribute to the D-glyceraldehyde 3-phosphate site; these read SCT and TG. Cys-122 serves as the catalytic Nucleophile. Residue Asn-286 coordinates NAD(+).

Belongs to the glyceraldehyde-3-phosphate dehydrogenase family. Homotetramer.

The protein localises to the cytoplasm. The catalysed reaction is D-glyceraldehyde 3-phosphate + phosphate + NAD(+) = (2R)-3-phospho-glyceroyl phosphate + NADH + H(+). It functions in the pathway carbohydrate degradation; glycolysis; pyruvate from D-glyceraldehyde 3-phosphate: step 1/5. Key enzyme in glycolysis that catalyzes the first step of the pathway by converting D-glyceraldehyde 3-phosphate (G3P) into 3-phospho-D-glyceroyl phosphate. Essential for the maintenance of cellular ATP levels and carbohydrate metabolism. The polypeptide is Glyceraldehyde-3-phosphate dehydrogenase 2, cytosolic (GAPC) (Hordeum vulgare (Barley)).